Consider the following 523-residue polypeptide: Tryptamine 5-hydroxylase (523 aa).

A helical membrane pass occupies residues 5–25 (MASTMSLALLVLSAAYVLVAL). Cys-453 provides a ligand contact to heme.

It belongs to the cytochrome P450 family. Heme is required as a cofactor.

It is found in the endoplasmic reticulum membrane. The enzyme catalyses tryptamine + reduced [NADPH--hemoprotein reductase] + O2 = serotonin + oxidized [NADPH--hemoprotein reductase] + H2O + H(+). Functionally, involved in serotonin biosynthesis. Catalyzes the conversion of tryptamine to serotonin. Accumulation of serotonin may play a role in innate immunity. This chain is Tryptamine 5-hydroxylase, found in Oryza sativa subsp. japonica (Rice).